Reading from the N-terminus, the 715-residue chain is Elongation factor G (715 aa).

One can recognise a tr-type G domain in the interval 12–309 (RRVRNIGIMA…GVIDYLPSPL (298 aa)). Residues 21-28 (AHIDAGKT), 108-112 (DTPGH), and 162-165 (NKMD) each bind GTP.

The protein belongs to the TRAFAC class translation factor GTPase superfamily. Classic translation factor GTPase family. EF-G/EF-2 subfamily.

It is found in the cytoplasm. Its function is as follows. Catalyzes the GTP-dependent ribosomal translocation step during translation elongation. During this step, the ribosome changes from the pre-translocational (PRE) to the post-translocational (POST) state as the newly formed A-site-bound peptidyl-tRNA and P-site-bound deacylated tRNA move to the P and E sites, respectively. Catalyzes the coordinated movement of the two tRNA molecules, the mRNA and conformational changes in the ribosome. The sequence is that of Elongation factor G from Rubrobacter xylanophilus (strain DSM 9941 / JCM 11954 / NBRC 16129 / PRD-1).